Reading from the N-terminus, the 86-residue chain is UPF0297 protein CA_C1679 (86 aa).

Belongs to the UPF0297 family.

The polypeptide is UPF0297 protein CA_C1679 (Clostridium acetobutylicum (strain ATCC 824 / DSM 792 / JCM 1419 / IAM 19013 / LMG 5710 / NBRC 13948 / NRRL B-527 / VKM B-1787 / 2291 / W)).